Consider the following 64-residue polypeptide: Bacteriocin plantaricin ASM1 (64 aa).

The N-terminal stretch at 1-21 is a signal peptide; that stretch reads MSKLVKTLTVDEISKIQTNGG. Residues 61–64 constitute a cross-link (lanthionine (Ser-Cys)); it reads SYHC.

Post-translationally, contains 2 disulfide bonds.

The protein localises to the secreted. Functionally, bacteriocin with a narrow antibacterial spectrum. Antibacterial activity against the Gram-positive bacteria L.plantarun, L.pentosus, L.curvatus, L.lindneri, L.mesenteroides and E.faecilis. Lacks antibacterial activity against the Gram-positive bacteria L.brevis, L.sakei, L.lactis, P.acidilactici, B.subtilis, B.cereus, L.monocytogenes and S.aureus, and against the Gram-negative bacteria E.coli and S.typhimurium. In Lactiplantibacillus plantarum (Lactobacillus plantarum), this protein is Bacteriocin plantaricin ASM1.